Here is a 297-residue protein sequence, read N- to C-terminus: Protein LRATD1 (297 aa).

Serine 38 carries the post-translational modification Phosphoserine. The region spanning 138 to 233 (PAPEPPAPAP…CRFGKREFKA (96 aa)) is the LRAT domain.

It belongs to the LRATD family.

It localises to the cytoplasm. Functionally, may play a role in cell morphology and motility. This is Protein LRATD1 (LRATD1) from Bos taurus (Bovine).